Reading from the N-terminus, the 483-residue chain is tRNA sulfurtransferase (483 aa).

One can recognise a THUMP domain in the interval 62–166 (PEICDALTRI…QDKLILVKAR (105 aa)). ATP is bound by residues 184 to 185 (LI), Lys266, Gly288, and Gln297. A disulfide bond links Cys345 and Cys457. The Rhodanese domain maps to 405 to 483 (LADTDVLLDI…GYTNVKVYRP (79 aa)). The active-site Cysteine persulfide intermediate is Cys457.

Belongs to the ThiI family.

The protein resides in the cytoplasm. It catalyses the reaction [ThiI sulfur-carrier protein]-S-sulfanyl-L-cysteine + a uridine in tRNA + 2 reduced [2Fe-2S]-[ferredoxin] + ATP + H(+) = [ThiI sulfur-carrier protein]-L-cysteine + a 4-thiouridine in tRNA + 2 oxidized [2Fe-2S]-[ferredoxin] + AMP + diphosphate. The catalysed reaction is [ThiS sulfur-carrier protein]-C-terminal Gly-Gly-AMP + S-sulfanyl-L-cysteinyl-[cysteine desulfurase] + AH2 = [ThiS sulfur-carrier protein]-C-terminal-Gly-aminoethanethioate + L-cysteinyl-[cysteine desulfurase] + A + AMP + 2 H(+). The protein operates within cofactor biosynthesis; thiamine diphosphate biosynthesis. In terms of biological role, catalyzes the ATP-dependent transfer of a sulfur to tRNA to produce 4-thiouridine in position 8 of tRNAs, which functions as a near-UV photosensor. Also catalyzes the transfer of sulfur to the sulfur carrier protein ThiS, forming ThiS-thiocarboxylate. This is a step in the synthesis of thiazole, in the thiamine biosynthesis pathway. The sulfur is donated as persulfide by IscS. The chain is tRNA sulfurtransferase from Yersinia pseudotuberculosis serotype O:1b (strain IP 31758).